The primary structure comprises 112 residues: Chaperone NapD (112 aa).

This sequence belongs to the NapD family. Interacts with the cytoplasmic NapA precursor.

The protein resides in the cytoplasm. Chaperone for NapA, the catalytic subunit of the periplasmic nitrate reductase. It binds directly and specifically to the twin-arginine signal peptide of NapA, preventing premature interaction with the Tat translocase and premature export. The sequence is that of Chaperone NapD from Paracoccus pantotrophus (Thiosphaera pantotropha).